Here is a 208-residue protein sequence, read N- to C-terminus: MKIERVNDNTVKFFITYTDIERRGFARDEIWYNRERGEQLFWQMMDEANEKESISFEGPLWIQVQAFEKGLEVTVTIAKTTIDGEQVDEDELDSLLRSAMSDAEEKETELSQDVLFETTDFEHIIALSQYAEAPIFEEVKTSLYQKDGLYLLHLHFKEETEVEEQENVMSLIAEYLNFSEQTIHPVAEYGKVIVPNDVFAFIRKHFPN.

The protein belongs to the MecA family. Homodimer.

In terms of biological role, enables the recognition and targeting of unfolded and aggregated proteins to the ClpC protease or to other proteins involved in proteolysis. In Exiguobacterium sibiricum (strain DSM 17290 / CCUG 55495 / CIP 109462 / JCM 13490 / 255-15), this protein is Adapter protein MecA.